A 447-amino-acid polypeptide reads, in one-letter code: Methyl-coenzyme M reductase I subunit beta (447 aa).

Coenzyme M is bound at residue Tyr371. Gly373 is a binding site for coenzyme B.

The protein belongs to the methyl-coenzyme M reductase beta subunit family. As to quaternary structure, MCR is a hexamer of two alpha, two beta, and two gamma chains, forming a dimer of heterotrimers. It depends on coenzyme F430 as a cofactor.

Its subcellular location is the cytoplasm. The enzyme catalyses coenzyme B + methyl-coenzyme M = methane + coenzyme M-coenzyme B heterodisulfide. It functions in the pathway one-carbon metabolism; methyl-coenzyme M reduction; methane from methyl-coenzyme M: step 1/1. In terms of biological role, component of the methyl-coenzyme M reductase (MCR) I that catalyzes the reductive cleavage of methyl-coenzyme M (CoM-S-CH3 or 2-(methylthio)ethanesulfonate) using coenzyme B (CoB or 7-mercaptoheptanoylthreonine phosphate) as reductant which results in the production of methane and the mixed heterodisulfide of CoB and CoM (CoM-S-S-CoB). This is the final step in methanogenesis. In Methanocaldococcus jannaschii (strain ATCC 43067 / DSM 2661 / JAL-1 / JCM 10045 / NBRC 100440) (Methanococcus jannaschii), this protein is Methyl-coenzyme M reductase I subunit beta (mcrB).